An 874-amino-acid polypeptide reads, in one-letter code: Alanine--tRNA ligase (874 aa).

Zn(2+) contacts are provided by H562, H566, C664, and H668.

This sequence belongs to the class-II aminoacyl-tRNA synthetase family. Zn(2+) serves as cofactor.

It localises to the cytoplasm. It carries out the reaction tRNA(Ala) + L-alanine + ATP = L-alanyl-tRNA(Ala) + AMP + diphosphate. In terms of biological role, catalyzes the attachment of alanine to tRNA(Ala) in a two-step reaction: alanine is first activated by ATP to form Ala-AMP and then transferred to the acceptor end of tRNA(Ala). Also edits incorrectly charged Ser-tRNA(Ala) and Gly-tRNA(Ala) via its editing domain. The sequence is that of Alanine--tRNA ligase from Shewanella oneidensis (strain ATCC 700550 / JCM 31522 / CIP 106686 / LMG 19005 / NCIMB 14063 / MR-1).